The primary structure comprises 92 residues: PqqA binding protein (92 aa).

It belongs to the PqqD family. As to quaternary structure, monomer. Interacts with PqqE.

Its pathway is cofactor biosynthesis; pyrroloquinoline quinone biosynthesis. Its function is as follows. Functions as a PqqA binding protein and presents PqqA to PqqE, in the pyrroloquinoline quinone (PQQ) biosynthetic pathway. This Xanthomonas euvesicatoria pv. vesicatoria (strain 85-10) (Xanthomonas campestris pv. vesicatoria) protein is PqqA binding protein.